A 307-amino-acid polypeptide reads, in one-letter code: Ribosomal protein L11 methyltransferase (307 aa).

The S-adenosyl-L-methionine site is built by Thr-154, Gly-178, Asp-200, and Asn-242.

It belongs to the methyltransferase superfamily. PrmA family.

It localises to the cytoplasm. It carries out the reaction L-lysyl-[protein] + 3 S-adenosyl-L-methionine = N(6),N(6),N(6)-trimethyl-L-lysyl-[protein] + 3 S-adenosyl-L-homocysteine + 3 H(+). In terms of biological role, methylates ribosomal protein L11. The sequence is that of Ribosomal protein L11 methyltransferase from Syntrophotalea carbinolica (strain DSM 2380 / NBRC 103641 / GraBd1) (Pelobacter carbinolicus).